Here is a 671-residue protein sequence, read N- to C-terminus: Envelope glycoprotein (671 aa).

A signal peptide spans 1 to 22 (MKPPAGMVFLWVLTSLGAGIGA). Residues 23 to 611 (KIVKEGNPHQ…YNKSPWFTTL (589 aa)) are Extracellular-facing. Cystine bridges form between Cys121-Cys142 and Cys134-Cys147. N-linked (GlcNAc...) asparagine; by host glycosylation is found at Asn169 and Asn281. The segment at 265 to 310 (VQPPRAPTQTPRVNPVNSTLSPSLGYPAPAPGPRPPYPTSPSRPGT) is disordered. Residues 271-286 (PTQTPRVNPVNSTLSP) show a composition bias toward polar residues. Residues 292 to 305 (APAPGPRPPYPTSP) are compositionally biased toward pro residues. N-linked (GlcNAc...) asparagine; by host glycans are attached at residues Asn326 and Asn331. The CXXC signature appears at 336–339 (CWLC). N-linked (GlcNAc...) asparagine; by host glycosylation is found at Asn355, Asn358, Asn415, and Asn435. Positions 473–493 (VSLTVALLLGGLTMGSLAAGI) are fusion peptide. 2 coiled-coil regions span residues 501–550 (IETN…LLFL) and 560–596 (KEEC…SQQG). The interval 539-555 (LQNRRGLDLLFLQEGGL) is immunosuppression. The CX6CC signature appears at 556 to 564 (CAALKEECC). The chain crosses the membrane as a helical span at residues 612–632 (VSSLMVPLILLLLILMFGPCI). A lipid anchor (S-palmitoyl cysteine; by host) is attached at Cys631. Residues 633 to 671 (LNHLLQFIRERLSVIQALVLTQQYHQLRQFDAERPDAIE) lie on the Cytoplasmic side of the membrane. The short motif at 656–659 (YHQL) is the YXXL motif; contains endocytosis signal element.

As to quaternary structure, the mature envelope protein (Env) consists of a trimer of SU-TM heterodimers attached by noncovalent interactions or by a labile interchain disulfide bond. In terms of processing, specific enzymatic cleavages in vivo yield mature proteins. Envelope glycoproteins are synthesized as an inactive precursor that is N-glycosylated and processed likely by host cell furin or by a furin-like protease in the Golgi to yield the mature SU and TM proteins. The cleavage site between SU and TM requires the minimal sequence [KR]-X-[KR]-R. The R-peptide is released from the C-terminus of the cytoplasmic tail of the TM protein upon particle formation as a result of proteolytic cleavage by the viral protease. Cleavage of this peptide is required for TM to become fusogenic. Post-translationally, the transmembrane protein is palmitoylated. The R-peptide is palmitoylated.

The protein localises to the virion membrane. The protein resides in the host cell membrane. The surface protein (SU) attaches the virus to the host cell by binding to its receptor. This interaction triggers the refolding of the transmembrane protein (TM) and is thought to activate its fusogenic potential by unmasking its fusion peptide. Fusion occurs at the host cell plasma membrane. In terms of biological role, the transmembrane protein (TM) acts as a class I viral fusion protein. Under the current model, the protein has at least 3 conformational states: pre-fusion native state, pre-hairpin intermediate state, and post-fusion hairpin state. During viral and target cell membrane fusion, the coiled coil regions (heptad repeats) assume a trimer-of-hairpins structure, positioning the fusion peptide in close proximity to the C-terminal region of the ectodomain. The formation of this structure appears to drive apposition and subsequent fusion of viral and target cell membranes. Membranes fusion leads to delivery of the nucleocapsid into the cytoplasm. This chain is Envelope glycoprotein (env), found in Felidae (cat family).